Reading from the N-terminus, the 544-residue chain is Dihydrolipoyllysine-residue acetyltransferase component of pyruvate dehydrogenase complex (544 aa).

2 consecutive Lipoyl-binding domains span residues 1–76 and 113–188; these read MYEF…VTID and IYDF…VLIG. N6-lipoyllysine occurs at positions 42 and 154. One can recognise a Peripheral subunit-binding (PSBD) domain in the interval 242–279; it reads LASPVARKLASDLGVDIATIKGSGEQGRVMKDDVQNSK. Residue His516 is part of the active site.

This sequence belongs to the 2-oxoacid dehydrogenase family. In terms of assembly, forms a 24-polypeptide structural core with octahedral symmetry. (R)-lipoate is required as a cofactor.

It catalyses the reaction N(6)-[(R)-dihydrolipoyl]-L-lysyl-[protein] + acetyl-CoA = N(6)-[(R)-S(8)-acetyldihydrolipoyl]-L-lysyl-[protein] + CoA. Functionally, the pyruvate dehydrogenase complex catalyzes the overall conversion of pyruvate to acetyl-CoA and CO(2). It contains multiple copies of three enzymatic components: pyruvate dehydrogenase (E1), dihydrolipoamide acetyltransferase (E2) and lipoamide dehydrogenase (E3). This chain is Dihydrolipoyllysine-residue acetyltransferase component of pyruvate dehydrogenase complex (pdhC), found in Acholeplasma laidlawii.